A 394-amino-acid chain; its full sequence is Phosphoglycerate kinase (394 aa).

Substrate-binding positions include 21–23 (DFN), Arg-36, 59–62 (HLGR), Arg-118, and Arg-151. Position 183 is a phosphoserine (Ser-183). Lys-201 serves as a coordination point for ATP. Position 299 is a phosphothreonine (Thr-299). ATP is bound by residues Glu-323 and 350–353 (GGDS).

Belongs to the phosphoglycerate kinase family. In terms of assembly, monomer.

The protein localises to the cytoplasm. The enzyme catalyses (2R)-3-phosphoglycerate + ATP = (2R)-3-phospho-glyceroyl phosphate + ADP. The protein operates within carbohydrate degradation; glycolysis; pyruvate from D-glyceraldehyde 3-phosphate: step 2/5. In Halalkalibacterium halodurans (strain ATCC BAA-125 / DSM 18197 / FERM 7344 / JCM 9153 / C-125) (Bacillus halodurans), this protein is Phosphoglycerate kinase.